The following is a 302-amino-acid chain: tRNA pseudouridine synthase B (302 aa).

The active-site Nucleophile is the Asp-43.

This sequence belongs to the pseudouridine synthase TruB family. Type 1 subfamily.

The catalysed reaction is uridine(55) in tRNA = pseudouridine(55) in tRNA. In terms of biological role, responsible for synthesis of pseudouridine from uracil-55 in the psi GC loop of transfer RNAs. The sequence is that of tRNA pseudouridine synthase B from Burkholderia pseudomallei (strain 668).